Consider the following 287-residue polypeptide: UPF0276 protein ACIAD0933 (287 aa).

It belongs to the UPF0276 family.

This chain is UPF0276 protein ACIAD0933, found in Acinetobacter baylyi (strain ATCC 33305 / BD413 / ADP1).